A 394-amino-acid chain; its full sequence is MSPPLDSSRPVVVIGAGIIGLTTVVCLLESQYYKQYHPPIHIIADYLPNDPLDAKYASTIAGAHHLSFADDGDGRQRNWDLKTFQVMYEQWRQFGEDSGLMALKQTELFVGQMDHLKIYEEHPNFMTLPASMLPPAIDHAVSFTSLTITPSVYLNRLLKQISSLSNGQVKLHRFHLPSLSFLSHPSIKALIGHEPTAGVIVCVGLGALVLGGVNDSLMYPTRGQVVKVRAPWVRSGYTRQIGSLNGGEGGERTYVIPRANGEIILGGTREEGDWYPYPREATTKDILRRAMEICPSLCPANLVAQPLSGTDDRSSTFSSNEQSPSYENPLDSLVIDSLVGFRPSRKGGIRLERGPDLDENTVVIYNYGHGGAGWQSSWGTAEEAVALFCKATRN.

Residues Ile19, Ala57, Ser58, and Gly62 each contribute to the FAD site. A helical membrane pass occupies residues 190–210; it reads LIGHEPTAGVIVCVGLGALVL. N-linked (GlcNAc...) asparagine glycosylation occurs at Asn214. FAD is bound by residues Arg342, Gly373, and Gln375.

The protein belongs to the DAMOX/DASOX family. FAD serves as cofactor.

It localises to the membrane. The enzyme catalyses D-aspartate + O2 + H2O = oxaloacetate + H2O2 + NH4(+). Its function is as follows. Selectively catalyzes the oxidative deamination of acidic amino acids. Protects the organism from the toxicity of D-amino acids. Enables the organism to utilize D-amino acids as a source of nutrients. Enables the organism to utilize D-aspartate and D-asparagine as a source of nitrogen. May play a role in its interaction with the host. The polypeptide is D-aspartate oxidase (Cryptococcus neoformans var. grubii serotype A (strain H99 / ATCC 208821 / CBS 10515 / FGSC 9487) (Filobasidiella neoformans var. grubii)).